The sequence spans 171 residues: 3-hydroxydecanoyl-[acyl-carrier-protein] dehydratase (171 aa).

His-70 is a catalytic residue.

It belongs to the thioester dehydratase family. FabA subfamily. In terms of assembly, homodimer.

It localises to the cytoplasm. The catalysed reaction is a (3R)-hydroxyacyl-[ACP] = a (2E)-enoyl-[ACP] + H2O. It carries out the reaction (3R)-hydroxydecanoyl-[ACP] = (2E)-decenoyl-[ACP] + H2O. It catalyses the reaction (2E)-decenoyl-[ACP] = (3Z)-decenoyl-[ACP]. The protein operates within lipid metabolism; fatty acid biosynthesis. Necessary for the introduction of cis unsaturation into fatty acids. Catalyzes the dehydration of (3R)-3-hydroxydecanoyl-ACP to E-(2)-decenoyl-ACP and then its isomerization to Z-(3)-decenoyl-ACP. Can catalyze the dehydratase reaction for beta-hydroxyacyl-ACPs with saturated chain lengths up to 16:0, being most active on intermediate chain length. The chain is 3-hydroxydecanoyl-[acyl-carrier-protein] dehydratase from Methylococcus capsulatus (strain ATCC 33009 / NCIMB 11132 / Bath).